Reading from the N-terminus, the 838-residue chain is MSFPPHLNRPPMGIPALPPGIPPPQFPGFPPPVPPGTPMIPVPMSIMAPAPTVLVPTVSMVGKHLGARKDHPGLKLKENDENCGPTTTVFVGNISEKASDMLIRQLLAKCGLVLSWKRVQGASGKLQAFGFCEYKEPESTLRALRLLHDLQIGEKKLLVKVDAKTKAQLDEWKAKKKANGNARPETVTNDDEEALDEETKRRDQMIKGAIEVLIREYSSELNAPSQESDSHPRKKKKEKKEDIFRRFPVAPLIPYPLITKEDINAIEMEEDKRDLISREISKFRDTHKKLEEEKGKKEKERQEIEKERRERERERERERERREREREREREREREKEKERERERERDRDRDRTKERDRDRERDRDRDRERSSDRNKDRSRSREKSRDREREREREREREREREREREREREREREREREREKDKKRDREEDEEDAYERRKLERKLREKEAAYQERLKNWEIRERKKTREYEKEAEREEERRREMAKEAKRLKEFLEDYDDDRDDPKYYRGSALQKRLRDREKEMEADERDRKREKEELEEIRQRLLAEGHPDPDAELQRMEQEAERRRQPQIKQEPESEEEEEEKQEKEEKREEPVEEEEEPEQKPCLKPTLRPISSAPSVSSASGNATPNTPGDESPCGIIIPHENSPDQQQPEEHRPKIGLSLKLGASNSPGQPNSVKRKKLPVDSVFNKFEDEDSDDVPRKRKLVPLDYGEDDKNATKGTVNTEEKRKHIKSLIEKIPTAKPELFAYPLDWSIVDSILMERRIRPWINKKIIEYIGEEEATLVDFVCSKVMAHSSPQSILDDVAMVLDEEAEVFIVKMWRLLIYETEAKKIGLVK.

The disordered stretch occupies residues 1-30; it reads MSFPPHLNRPPMGIPALPPGIPPPQFPGFP. Residues 12 to 30 show a composition bias toward pro residues; that stretch reads MGIPALPPGIPPPQFPGFP. The 78-residue stretch at 87–164 folds into the RRM domain; it reads TTVFVGNISE…KKLLVKVDAK (78 aa). K135 carries the N6-acetyllysine modification. 2 disordered regions span residues 173–201 and 220–242; these read KAKK…ETKR and ELNA…KKED. S225 and S228 each carry phosphoserine. Glycyl lysine isopeptide (Lys-Gly) (interchain with G-Cter in SUMO2) cross-links involve residues K260, K272, and K425. 2 stretches are compositionally biased toward basic and acidic residues: residues 282 to 428 and 516 to 568; these read KFRD…KRDR and RLRD…ERRR. Disordered stretches follow at residues 282 to 437 and 493 to 683; these read KFRD…DAYE and EFLE…KRKK. The necessary for nuclear speckle localization stretch occupies residues 284-639; it reads RDTHKKLEEE…PNTPGDESPC (356 aa). K573 participates in a covalent cross-link: Glycyl lysine isopeptide (Lys-Gly) (interchain with G-Cter in SUMO2). S578 bears the Phosphoserine mark. Residues 585–594 show a composition bias toward basic and acidic residues; it reads KQEKEEKREE. Residues 616 to 625 show a composition bias toward low complexity; that stretch reads SSAPSVSSAS. Residue K666 forms a Glycyl lysine isopeptide (Lys-Gly) (interchain with G-Cter in SUMO2) linkage. Residues 669 to 678 show a composition bias toward polar residues; sequence ASNSPGQPNS. A phosphoserine mark is found at S672 and S678. Glycyl lysine isopeptide (Lys-Gly) (interchain with G-Cter in SUMO2) cross-links involve residues K683 and K692. At S698 the chain carries Phosphoserine. K717 is covalently cross-linked (Glycyl lysine isopeptide (Lys-Gly) (interchain with G-Cter in SUMO2)). Residues 745 to 838 form the PWI domain; the sequence is PELFAYPLDW…TEAKKIGLVK (94 aa).

As to quaternary structure, interacts with LUC7L3 and SRRM1. Specifically associates with functional splicing complexes, including Sm proteins and U1, U2, U4, U5 and U6 snRNAs. Associates with exon junction complex (EJC) proteins, including APEX1, DDX39B, NCBP1, RBM8A and RNPS1. Interaction with NCBP1 is RNA-dependent. Sumoylated.

It localises to the nucleus speckle. It is found in the cytoplasm. RNA-binding protein that acts as a regulator of alternative pre-mRNA splicing. Involved in apoptotic cell death through the regulation of the apoptotic factor BCL2L1 isoform expression. Modulates the ratio of proapoptotic BCL2L1 isoform S to antiapoptotic BCL2L1 isoform L mRNA expression. When overexpressed, stimulates proapoptotic BCL2L1 isoform S 5'-splice site (5'-ss) selection, whereas its depletion caused the accumulation of antiapoptotic BCL2L1 isoform L. Promotes BCL2L1 isoform S 5'-ss usage through the 5'-CGGGCA-3' RNA sequence. Its association with LUC7L3 promotes U1 snRNP binding to a weak 5' ss in a 5'-CGGGCA-3'-dependent manner. Binds to the exonic splicing enhancer 5'-CGGGCA-3' RNA sequence located within exon 2 of the BCL2L1 pre-mRNA. The chain is RNA-binding protein 25 (Rbm25) from Mus musculus (Mouse).